Consider the following 207-residue polypeptide: Large ribosomal subunit protein uL4 (207 aa).

Polar residues predominate over residues 43 to 52 (NKRQGTQSAK). Residues 43 to 72 (NKRQGTQSAKTRAEVRGGGRKPWKQKGTGR) form a disordered region. Over residues 60–71 (GGRKPWKQKGTG) the composition is skewed to basic residues.

Belongs to the universal ribosomal protein uL4 family. In terms of assembly, part of the 50S ribosomal subunit.

Its function is as follows. One of the primary rRNA binding proteins, this protein initially binds near the 5'-end of the 23S rRNA. It is important during the early stages of 50S assembly. It makes multiple contacts with different domains of the 23S rRNA in the assembled 50S subunit and ribosome. In terms of biological role, forms part of the polypeptide exit tunnel. This chain is Large ribosomal subunit protein uL4, found in Alkaliphilus metalliredigens (strain QYMF).